A 327-amino-acid chain; its full sequence is GTP 3',8-cyclase (327 aa).

The Radical SAM core domain occupies 8-232 (AFARKFYYLR…LQRSRSDGPA (225 aa)). Arg-17 contributes to the GTP binding site. [4Fe-4S] cluster contacts are provided by Cys-24 and Cys-28. Tyr-30 contributes to the S-adenosyl-L-methionine binding site. Cys-31 lines the [4Fe-4S] cluster pocket. Position 66 (Arg-66) interacts with GTP. Gly-70 is an S-adenosyl-L-methionine binding site. A GTP-binding site is contributed by Thr-97. Ser-121 provides a ligand contact to S-adenosyl-L-methionine. Lys-158 is a GTP binding site. Met-192 contacts S-adenosyl-L-methionine. Residues Cys-255 and Cys-258 each contribute to the [4Fe-4S] cluster site. Position 260–262 (260–262 (RLR)) interacts with GTP. Cys-272 is a [4Fe-4S] cluster binding site.

The protein belongs to the radical SAM superfamily. MoaA family. In terms of assembly, monomer and homodimer. [4Fe-4S] cluster serves as cofactor.

The enzyme catalyses GTP + AH2 + S-adenosyl-L-methionine = (8S)-3',8-cyclo-7,8-dihydroguanosine 5'-triphosphate + 5'-deoxyadenosine + L-methionine + A + H(+). It functions in the pathway cofactor biosynthesis; molybdopterin biosynthesis. In terms of biological role, catalyzes the cyclization of GTP to (8S)-3',8-cyclo-7,8-dihydroguanosine 5'-triphosphate. The sequence is that of GTP 3',8-cyclase from Photorhabdus laumondii subsp. laumondii (strain DSM 15139 / CIP 105565 / TT01) (Photorhabdus luminescens subsp. laumondii).